Here is a 243-residue protein sequence, read N- to C-terminus: 3-deoxy-manno-octulosonate cytidylyltransferase (243 aa).

Belongs to the KdsB family.

It is found in the cytoplasm. The catalysed reaction is 3-deoxy-alpha-D-manno-oct-2-ulosonate + CTP = CMP-3-deoxy-beta-D-manno-octulosonate + diphosphate. It participates in nucleotide-sugar biosynthesis; CMP-3-deoxy-D-manno-octulosonate biosynthesis; CMP-3-deoxy-D-manno-octulosonate from 3-deoxy-D-manno-octulosonate and CTP: step 1/1. It functions in the pathway bacterial outer membrane biogenesis; lipopolysaccharide biosynthesis. Functionally, activates KDO (a required 8-carbon sugar) for incorporation into bacterial lipopolysaccharide in Gram-negative bacteria. This chain is 3-deoxy-manno-octulosonate cytidylyltransferase, found in Bartonella quintana (strain Toulouse) (Rochalimaea quintana).